Here is a 196-residue protein sequence, read N- to C-terminus: NAD(P)H-quinone oxidoreductase subunit I (196 aa).

4Fe-4S ferredoxin-type domains follow at residues 55–84 (GRIH…VDWE) and 95–124 (KHYS…MTEE). Residues Cys64, Cys67, Cys70, Cys74, Cys104, Cys107, Cys110, and Cys114 each contribute to the [4Fe-4S] cluster site. Residues 170–196 (SPHDLPEGSQRSGKRPEEIIEEAEASS) form a disordered region.

It belongs to the complex I 23 kDa subunit family. As to quaternary structure, NDH-1 is composed of at least 11 different subunits. [4Fe-4S] cluster serves as cofactor.

The protein resides in the cellular thylakoid membrane. It carries out the reaction a plastoquinone + NADH + (n+1) H(+)(in) = a plastoquinol + NAD(+) + n H(+)(out). It catalyses the reaction a plastoquinone + NADPH + (n+1) H(+)(in) = a plastoquinol + NADP(+) + n H(+)(out). Functionally, NDH-1 shuttles electrons from an unknown electron donor, via FMN and iron-sulfur (Fe-S) centers, to quinones in the respiratory and/or the photosynthetic chain. The immediate electron acceptor for the enzyme in this species is believed to be plastoquinone. Couples the redox reaction to proton translocation, and thus conserves the redox energy in a proton gradient. The polypeptide is NAD(P)H-quinone oxidoreductase subunit I (Crocosphaera subtropica (strain ATCC 51142 / BH68) (Cyanothece sp. (strain ATCC 51142))).